Reading from the N-terminus, the 910-residue chain is Bifunctional glucose-6-phosphate 1-dehydrogenase/6-phosphogluconolactonase (910 aa).

The tract at residues 1-170 (MDYENFVKSA…DFHIASLFPN (170 aa)) is 6-phosphogluconolactonase. A linker region spans residues 171–276 (IFYNIYMNNY…PATYLIDTSC (106 aa)). Residues 277-910 (TNENVNINNN…FYEDDLLDIN (634 aa)) form a glucose-6-phosphate 1-dehydrogenase region. Residues 345–352 (GCSGDLAK), Arg-379, and Lys-548 contribute to the NADP(+) site. D-glucose 6-phosphate-binding positions include Lys-548, 578 to 582 (HYLGK), Glu-616, and Asp-635. His-640 acts as the Proton acceptor in catalysis. The disordered stretch occupies residues 689-711 (ENFKEDENNDDESKKNHSYHDDP). Lys-742 provides a ligand contact to NADP(+). Residue Lys-745 participates in D-glucose 6-phosphate binding. Residue Arg-755 coordinates NADP(+). Position 779 (Gln-779) interacts with D-glucose 6-phosphate. Position 785–787 (785–787 (YLK)) interacts with NADP(+).

This sequence in the N-terminal section; belongs to the glucosamine/galactosamine-6-phosphate isomerase family. 6-phosphogluconolactonase subfamily. The protein in the C-terminal section; belongs to the glucose-6-phosphate dehydrogenase family. In terms of assembly, homotetramer.

The catalysed reaction is 6-phospho-D-glucono-1,5-lactone + H2O = 6-phospho-D-gluconate + H(+). It catalyses the reaction D-glucose 6-phosphate + NADP(+) = 6-phospho-D-glucono-1,5-lactone + NADPH + H(+). It functions in the pathway carbohydrate degradation; pentose phosphate pathway; D-ribulose 5-phosphate from D-glucose 6-phosphate (oxidative stage): step 1/3. The protein operates within carbohydrate degradation; pentose phosphate pathway; D-ribulose 5-phosphate from D-glucose 6-phosphate (oxidative stage): step 2/3. With respect to regulation, G6PD activity is inhibited by glucosamine-6-phosphate, NADPH, and 4-(4-bromophenyl)-7-(3,4-dimethoxyphenyl)-4,6,7,8-tetrahydroquinoline-2,5(1 H,3H)-dione. G6PD and 6PGL activities can be reversibly inhibited by S-glutathionylation (in vitro). Functionally, bifunctional enzyme which catalyzes the first two steps of the oxidative pentose-phosphate pathway, which represents a route for the dissimilation of carbohydrates besides glycolysis. The main function of this enzyme is to provide reducing power (NADPH) and pentose phosphates for fatty acid and nucleic acid synthesis. The protein is Bifunctional glucose-6-phosphate 1-dehydrogenase/6-phosphogluconolactonase of Plasmodium falciparum (isolate 3D7).